The following is a 504-amino-acid chain: Maturase K (504 aa).

The protein belongs to the intron maturase 2 family. MatK subfamily.

The protein localises to the plastid. The protein resides in the chloroplast. Its function is as follows. Usually encoded in the trnK tRNA gene intron. Probably assists in splicing its own and other chloroplast group II introns. This Quercus robur (English oak) protein is Maturase K.